Reading from the N-terminus, the 484-residue chain is HTH-type transcriptional regulator TauR (484 aa).

Positions 16-84 (GSLQHRLRQM…GRSGTFVSAA (69 aa)) constitute an HTH gntR-type domain. The H-T-H motif DNA-binding region spans 44–63 (TRALAAHLGVARITVTLAYA). K330 is modified (N6-(pyridoxal phosphate)lysine).

In the C-terminal section; belongs to the class-I pyridoxal-phosphate-dependent aminotransferase family. Pyridoxal 5'-phosphate serves as cofactor.

Transcriptional activator, which is essential for taurine-dependent expression of the tpa-tauR-xsc operon. Acts by binding to direct repeats in the promoter region. This chain is HTH-type transcriptional regulator TauR, found in Rhodobacter capsulatus (strain ATCC BAA-309 / NBRC 16581 / SB1003).